Reading from the N-terminus, the 417-residue chain is NADH-quinone oxidoreductase subunit D (417 aa).

This sequence belongs to the complex I 49 kDa subunit family. In terms of assembly, NDH-1 is composed of 14 different subunits. Subunits NuoB, C, D, E, F, and G constitute the peripheral sector of the complex.

The protein resides in the cell inner membrane. It catalyses the reaction a quinone + NADH + 5 H(+)(in) = a quinol + NAD(+) + 4 H(+)(out). Functionally, NDH-1 shuttles electrons from NADH, via FMN and iron-sulfur (Fe-S) centers, to quinones in the respiratory chain. The immediate electron acceptor for the enzyme in this species is believed to be ubiquinone. Couples the redox reaction to proton translocation (for every two electrons transferred, four hydrogen ions are translocated across the cytoplasmic membrane), and thus conserves the redox energy in a proton gradient. This is NADH-quinone oxidoreductase subunit D from Azoarcus sp. (strain BH72).